The primary structure comprises 432 residues: 3-phosphoshikimate 1-carboxyvinyltransferase (432 aa).

3 residues coordinate 3-phosphoshikimate: Lys23, Ser24, and Arg28. Phosphoenolpyruvate is bound at residue Lys23. 2 residues coordinate phosphoenolpyruvate: Gly95 and Arg123. 3-phosphoshikimate contacts are provided by Ser167, Gln169, Asp317, and Lys344. Position 169 (Gln169) interacts with phosphoenolpyruvate. The active-site Proton acceptor is the Asp317. Positions 348 and 390 each coordinate phosphoenolpyruvate.

Belongs to the EPSP synthase family. Monomer.

Its subcellular location is the cytoplasm. The catalysed reaction is 3-phosphoshikimate + phosphoenolpyruvate = 5-O-(1-carboxyvinyl)-3-phosphoshikimate + phosphate. The protein operates within metabolic intermediate biosynthesis; chorismate biosynthesis; chorismate from D-erythrose 4-phosphate and phosphoenolpyruvate: step 6/7. In terms of biological role, catalyzes the transfer of the enolpyruvyl moiety of phosphoenolpyruvate (PEP) to the 5-hydroxyl of shikimate-3-phosphate (S3P) to produce enolpyruvyl shikimate-3-phosphate and inorganic phosphate. The polypeptide is 3-phosphoshikimate 1-carboxyvinyltransferase (Staphylococcus saprophyticus subsp. saprophyticus (strain ATCC 15305 / DSM 20229 / NCIMB 8711 / NCTC 7292 / S-41)).